Reading from the N-terminus, the 899-residue chain is Probable disease resistance protein RXW24L (899 aa).

Residues 13–50 (DRLSQEYDQFKGVEDQVTELKSNLNLLKSFLKDADAKK) adopt a coiled-coil conformation. Positions 143-455 (LQERQREMRH…AEGISERRRY (313 aa)) constitute an NB-ARC domain. 189–196 (GMGGLGKT) is an ATP binding site.

The protein belongs to the disease resistance NB-LRR family.

Potential disease resistance protein. This Arabidopsis thaliana (Mouse-ear cress) protein is Probable disease resistance protein RXW24L (RXW24L).